The primary structure comprises 353 residues: Uroporphyrinogen decarboxylase (353 aa).

Residues R30–R34, D79, Y154, S209, and H332 each bind substrate.

It belongs to the uroporphyrinogen decarboxylase family. Homodimer.

It is found in the cytoplasm. It carries out the reaction uroporphyrinogen III + 4 H(+) = coproporphyrinogen III + 4 CO2. The protein operates within porphyrin-containing compound metabolism; protoporphyrin-IX biosynthesis; coproporphyrinogen-III from 5-aminolevulinate: step 4/4. Functionally, catalyzes the decarboxylation of four acetate groups of uroporphyrinogen-III to yield coproporphyrinogen-III. The chain is Uroporphyrinogen decarboxylase from Mycobacterium marinum (strain ATCC BAA-535 / M).